A 581-amino-acid polypeptide reads, in one-letter code: Arginine--tRNA ligase (581 aa).

A 'HIGH' region motif is present at residues 122-132 (PNVAKPMHVGH).

It belongs to the class-I aminoacyl-tRNA synthetase family. As to quaternary structure, monomer.

It is found in the cytoplasm. The catalysed reaction is tRNA(Arg) + L-arginine + ATP = L-arginyl-tRNA(Arg) + AMP + diphosphate. This Francisella tularensis subsp. tularensis (strain FSC 198) protein is Arginine--tRNA ligase.